The primary structure comprises 1224 residues: ATP-dependent helicase/nuclease subunit A (1224 aa).

Positions 15-480 (VIWTDAQWQS…IDLSQNFRSR (466 aa)) constitute a UvrD-like helicase ATP-binding domain. 36-43 (AAAGSGKT) contacts ATP. The region spanning 497–791 (EQVGEISYDD…RMMTIHSSKG (295 aa)) is the UvrD-like helicase C-terminal domain.

Belongs to the helicase family. AddA subfamily. In terms of assembly, heterodimer of AddA and AddB/RexB. Mg(2+) serves as cofactor.

It carries out the reaction Couples ATP hydrolysis with the unwinding of duplex DNA by translocating in the 3'-5' direction.. The enzyme catalyses ATP + H2O = ADP + phosphate + H(+). The heterodimer acts as both an ATP-dependent DNA helicase and an ATP-dependent, dual-direction single-stranded exonuclease. Recognizes the chi site generating a DNA molecule suitable for the initiation of homologous recombination. The AddA nuclease domain is required for chi fragment generation; this subunit has the helicase and 3' -&gt; 5' nuclease activities. This is ATP-dependent helicase/nuclease subunit A from Staphylococcus epidermidis (strain ATCC 12228 / FDA PCI 1200).